Consider the following 702-residue polypeptide: Polyribonucleotide nucleotidyltransferase (702 aa).

Positions 485 and 491 each coordinate Mg(2+). Residues 552 to 612 (PRTEIICIDP…EGVKKAISII (61 aa)) enclose the KH domain. Residues 622 to 690 (GEIYLGKVTK…NQGRINLSRK (69 aa)) form the S1 motif domain.

This sequence belongs to the polyribonucleotide nucleotidyltransferase family. It depends on Mg(2+) as a cofactor.

It is found in the cytoplasm. It catalyses the reaction RNA(n+1) + phosphate = RNA(n) + a ribonucleoside 5'-diphosphate. Its function is as follows. Involved in mRNA degradation. Catalyzes the phosphorolysis of single-stranded polyribonucleotides processively in the 3'- to 5'-direction. This is Polyribonucleotide nucleotidyltransferase from Clostridium botulinum (strain Langeland / NCTC 10281 / Type F).